Consider the following 473-residue polypeptide: Ribulose bisphosphate carboxylase large chain (473 aa).

Substrate-binding residues include asparagine 116 and threonine 166. The active-site Proton acceptor is lysine 168. Substrate is bound at residue lysine 170. 3 residues coordinate Mg(2+): lysine 194, aspartate 196, and glutamate 197. Lysine 194 is subject to N6-carboxylysine. The active-site Proton acceptor is the histidine 287. Arginine 288, histidine 320, and serine 372 together coordinate substrate.

Belongs to the RuBisCO large chain family. Type I subfamily. Heterohexadecamer of 8 large chains and 8 small chains. The cofactor is Mg(2+).

The enzyme catalyses 2 (2R)-3-phosphoglycerate + 2 H(+) = D-ribulose 1,5-bisphosphate + CO2 + H2O. It catalyses the reaction D-ribulose 1,5-bisphosphate + O2 = 2-phosphoglycolate + (2R)-3-phosphoglycerate + 2 H(+). Its function is as follows. RuBisCO catalyzes two reactions: the carboxylation of D-ribulose 1,5-bisphosphate, the primary event in carbon dioxide fixation, as well as the oxidative fragmentation of the pentose substrate. Both reactions occur simultaneously and in competition at the same active site. This Methylococcus capsulatus (strain ATCC 33009 / NCIMB 11132 / Bath) protein is Ribulose bisphosphate carboxylase large chain.